Here is a 219-residue protein sequence, read N- to C-terminus: Steroid receptor RNA activator 1 (219 aa).

Disordered stretches follow at residues 1 to 90 (MAEL…SSPV) and 192 to 219 (SLSS…QPSS). Over residues 23 to 32 (YGLQTQTGGT) the composition is skewed to polar residues. Residue Ser48 is modified to Phosphoserine. Residues 55–76 (SGPPPVDHPPPSSKASRPPPMG) show a composition bias toward pro residues. Residues 192-203 (SLSSEENKEEKS) are compositionally biased toward basic and acidic residues. Residues 206–219 (APENQTIPGFQPSS) are compositionally biased toward polar residues.

The protein belongs to the SRA1 family. As to quaternary structure, SRA1 RNA exists in a ribonucleoprotein complex containing NCOA1. The RNA also forms a complex with PUS1 and RARG in the nucleus. Interacts with AR. Expressed in various prostate cancer cell lines.

It localises to the nucleus. It is found in the cytoplasm. Functional RNA which acts as a transcriptional coactivator that selectively enhances steroid receptor-mediated transactivation ligand-independently through a mechanism involving the modulating N-terminal domain (AF-1) of steroid receptors. Also mediates transcriptional coactivation of steroid receptors ligand-dependently through the steroid-binding domain (AF-2). Enhances cellular proliferation and differentiation and promotes apoptosis in vivo. May play a role in tumorigenesis. The sequence is that of Steroid receptor RNA activator 1 from Rattus norvegicus (Rat).